Consider the following 311-residue polypeptide: MIDNQHKTVLLYEAVDSLNIQNDGIYIDATFGRGGHSSLILSRLGSQGKLISIDRDPEAVKKAKLMKDPRFSFIQGSFSDLYHYVKKLDLMGRINGLLFDLGVSSPQLDDAKRGFSFMRDGPLDMRMDPSRGLSAAEWLMKVNVENLAWVLKNFGEERFSTRLARAIVERNRLNPIKSTKELADLISHVIPVRNHHKHPATRSFQAIRIYINNELQEISSALNAALEILSLGARLSVVSFHSLEDRIVKNFIRQHSRGPQILRGLPLTEIQIQSMWQPKLKLIGKTMPSQKEVLDNPRSRSSILRFAERIN.

S-adenosyl-L-methionine is bound by residues 34-36, Asp54, Phe78, Asp100, and Gln107; that span reads GGH.

The protein belongs to the methyltransferase superfamily. RsmH family.

It localises to the cytoplasm. It catalyses the reaction cytidine(1402) in 16S rRNA + S-adenosyl-L-methionine = N(4)-methylcytidine(1402) in 16S rRNA + S-adenosyl-L-homocysteine + H(+). In terms of biological role, specifically methylates the N4 position of cytidine in position 1402 (C1402) of 16S rRNA. In Hamiltonella defensa subsp. Acyrthosiphon pisum (strain 5AT), this protein is Ribosomal RNA small subunit methyltransferase H.